The primary structure comprises 103 residues: Large ribosomal subunit protein bL21 (103 aa).

It belongs to the bacterial ribosomal protein bL21 family. Part of the 50S ribosomal subunit. Contacts protein L20.

In terms of biological role, this protein binds to 23S rRNA in the presence of protein L20. This Yersinia pseudotuberculosis serotype O:1b (strain IP 31758) protein is Large ribosomal subunit protein bL21.